We begin with the raw amino-acid sequence, 55 residues long: UPF0434 protein Erum1340/ERWE_CDS_01300 (55 aa).

This sequence belongs to the UPF0434 family.

This chain is UPF0434 protein Erum1340/ERWE_CDS_01300, found in Ehrlichia ruminantium (strain Welgevonden).